A 512-amino-acid chain; its full sequence is Cobyric acid synthase (512 aa).

Residues 254-455 (EIDIAVVKLP…LHGLFDNKAL (202 aa)) enclose the GATase cobBQ-type domain. Cys335 acts as the Nucleophile in catalysis. His447 is a catalytic residue.

Belongs to the CobB/CobQ family. CobQ subfamily.

Its pathway is cofactor biosynthesis; adenosylcobalamin biosynthesis. Catalyzes amidations at positions B, D, E, and G on adenosylcobyrinic A,C-diamide. NH(2) groups are provided by glutamine, and one molecule of ATP is hydrogenolyzed for each amidation. The chain is Cobyric acid synthase from Desulforamulus reducens (strain ATCC BAA-1160 / DSM 100696 / MI-1) (Desulfotomaculum reducens).